Reading from the N-terminus, the 155-residue chain is SsrA-binding protein (155 aa).

Belongs to the SmpB family.

It is found in the cytoplasm. In terms of biological role, required for rescue of stalled ribosomes mediated by trans-translation. Binds to transfer-messenger RNA (tmRNA), required for stable association of tmRNA with ribosomes. tmRNA and SmpB together mimic tRNA shape, replacing the anticodon stem-loop with SmpB. tmRNA is encoded by the ssrA gene; the 2 termini fold to resemble tRNA(Ala) and it encodes a 'tag peptide', a short internal open reading frame. During trans-translation Ala-aminoacylated tmRNA acts like a tRNA, entering the A-site of stalled ribosomes, displacing the stalled mRNA. The ribosome then switches to translate the ORF on the tmRNA; the nascent peptide is terminated with the 'tag peptide' encoded by the tmRNA and targeted for degradation. The ribosome is freed to recommence translation, which seems to be the essential function of trans-translation. This is SsrA-binding protein from Bacillus cereus (strain B4264).